We begin with the raw amino-acid sequence, 446 residues long: Delta(8)-fatty-acid desaturase (446 aa).

Positions 5-89 (KKYISVGELE…LEDYLVSEIS (85 aa)) constitute a Cytochrome b5 heme-binding domain. Residues His-40 and His-63 each coordinate heme. Helical transmembrane passes span 112-132 (VIYCLSFIALLLCGCVYGVLC) and 136-156 (LWVHMLSGAMLGMCFIQAAYL). Positions 158–162 (HDSGH) match the Histidine box-1 motif. Transmembrane regions (helical) follow at residues 174 to 195 (FAQVLNGNCLTGISIAWWKWTH), 253 to 273 (IYLVMIFGRINLYVQTFLLLF), 282 to 302 (ALNIIGILVYWTWFPYLVSCL), and 309 to 329 (VLFVLTCFSVTALQHIQFTLN). Residues 195-199 (HNAHH) carry the Histidine box-2 motif. The Histidine box-3 signature appears at 372–376 (QLEHH).

It belongs to the fatty acid desaturase type 1 family. The cofactor is Fe cation. In terms of tissue distribution, expressed only in young leaves.

The protein localises to the membrane. It catalyses the reaction an N-acyl-(4R)-4-hydroxysphinganine + 2 Fe(II)-[cytochrome b5] + O2 + 2 H(+) = a (4R,8E)-4-hydroxysphingenine ceramide + 2 Fe(III)-[cytochrome b5] + 2 H2O. The enzyme catalyses an N-acyl-(4R)-4-hydroxysphinganine + 2 Fe(II)-[cytochrome b5] + O2 + 2 H(+) = a (4R,8Z)-4-hydroxysphing-8-enine ceramide + 2 Fe(III)-[cytochrome b5] + 2 H2O. In terms of biological role, plays a major role as delta(8)-fatty-acid desaturase which introduces a double bond at the 8-position in the long-chain base (LCB) of ceramides with or without a hydroxy group at the 4-position. The enzyme produces both the 8E and 8Z isomers (in a 4:1 ratio). This structural modification contributes to the quantitative partitioning of ceramides between the two major sphingolipid classes, glucosylceramides and glycosylinositolphosphoryl ceramides. Sphingolipids are important membrane components involved in environmental stress responses, such as resistance to chilling, and act as cell signaling molecules. In Borago officinalis (Bourrache), this protein is Delta(8)-fatty-acid desaturase (sld1).